Here is a 200-residue protein sequence, read N- to C-terminus: Pyridoxine/pyridoxamine 5'-phosphate oxidase (200 aa).

FMN-binding positions include 48 to 53 (RMVLLK), 63 to 64 (YT), lysine 70, and glutamine 92. Residue lysine 53 participates in substrate binding. Tyrosine 110, arginine 114, and serine 118 together coordinate substrate. FMN is bound by residues 127–128 (QS) and tryptophan 171. 177-179 (RLH) contacts substrate. Residue arginine 181 coordinates FMN.

It belongs to the pyridoxamine 5'-phosphate oxidase family. Homodimer. FMN serves as cofactor.

The enzyme catalyses pyridoxamine 5'-phosphate + O2 + H2O = pyridoxal 5'-phosphate + H2O2 + NH4(+). It carries out the reaction pyridoxine 5'-phosphate + O2 = pyridoxal 5'-phosphate + H2O2. It functions in the pathway cofactor metabolism; pyridoxal 5'-phosphate salvage; pyridoxal 5'-phosphate from pyridoxamine 5'-phosphate: step 1/1. The protein operates within cofactor metabolism; pyridoxal 5'-phosphate salvage; pyridoxal 5'-phosphate from pyridoxine 5'-phosphate: step 1/1. Its function is as follows. Catalyzes the oxidation of either pyridoxine 5'-phosphate (PNP) or pyridoxamine 5'-phosphate (PMP) into pyridoxal 5'-phosphate (PLP). In Cereibacter sphaeroides (strain ATCC 17023 / DSM 158 / JCM 6121 / CCUG 31486 / LMG 2827 / NBRC 12203 / NCIMB 8253 / ATH 2.4.1.) (Rhodobacter sphaeroides), this protein is Pyridoxine/pyridoxamine 5'-phosphate oxidase.